Reading from the N-terminus, the 740-residue chain is Transcription activator of gluconeogenesis NCU03938 (740 aa).

The interval 1 to 66 (MPDDVGPAEA…KYDPKDPLRP (66 aa)) is disordered. The span at 19–37 (SDNEYDETEVTTKDDDDEK) shows a compositional bias: acidic residues. The segment covering 52-65 (GDQKKKYDPKDPLR) has biased composition (basic and acidic residues). The zn(2)-C6 fungal-type DNA-binding region spans 75-103 (CYACQRAHLTCGDERPCQRCIKRGLAEAC). Disordered regions lie at residues 333-405 (PAGP…RQRD), 532-579 (NSDT…KEQP), and 639-674 (APTA…PTGV). Residues 337-351 (TSLQSPSTENNSPQP) are compositionally biased toward polar residues. A PAS domain is found at 475 to 546 (ALFEHEEFMH…SISSKGGRGG (72 aa)). Residues 639–658 (APTASGGSGSSNGTVVNGGP) show a composition bias toward low complexity.

Belongs to the ERT1/acuK family.

It is found in the nucleus. Functionally, transcription factor which regulates nonfermentable carbon utilization. Activator of gluconeogenetic genes. The polypeptide is Transcription activator of gluconeogenesis NCU03938 (Neurospora crassa (strain ATCC 24698 / 74-OR23-1A / CBS 708.71 / DSM 1257 / FGSC 987)).